Consider the following 129-residue polypeptide: GEL complex subunit OPTI (129 aa).

At 1-44 (MSGGRRKEEPPQPQLANGALKVSVWSKVLRSDAAWEDKDEFLDV) the chain is on the cytoplasmic side. The chain crosses the membrane as a helical span at residues 45 to 65 (IYWFRQIIAVVLGVIWGVLPL). Position 66 (R66) is a topological domain, lumenal. A helical transmembrane segment spans residues 67 to 84 (GFLGIAGFCVINAGVLYL). Residues 85–103 (YFSNYLQIDEEEYGGTWEL) lie on the Cytoplasmic side of the membrane. A helical membrane pass occupies residues 104 to 127 (TKEGFMTSFALFMVIWIIFYTAIH). The Lumenal segment spans residues 128–129 (YD).

Belongs to the EMC6 family. Component of the GET- and EMC-like (GEL) complex, composed of RAB5IF/OPTI and TMCO1. The GEL complex is part of the multi-pass translocon (MPT) complex, composed of three subcomplexes, the GEL complex (composed of RAB5IF/OPTI and TMCO1), the BOS complex (composed of NCLN/Nicalin, NOMO1 and TMEM147) and the PAT complex (composed of WDR83OS/Asterix and CCDC47). The MPT complex associates with the SEC61 complex. Interacts with NDUFS3, NDUFA4, NDUFV1, NDUFA9 and NDUFS8 of the mitochondrial membrane respiratory chain NADH dehydrogenase (Complex I). Interacts with UQCRC2 of the ubiquinol-cytochrome c reductase complex (Complex III). Interacts with COX5A and COX7C of the cytochrome c oxidase complex (Complex IV).

It is found in the endoplasmic reticulum membrane. It localises to the mitochondrion inner membrane. Component of the multi-pass translocon (MPT) complex that mediates insertion of multi-pass membrane proteins into the lipid bilayer of membranes. The MPT complex takes over after the SEC61 complex: following membrane insertion of the first few transmembrane segments of proteins by the SEC61 complex, the MPT complex occludes the lateral gate of the SEC61 complex to promote insertion of subsequent transmembrane regions. Within the MPT complex, the GEL subcomplex may mediate insertion of transmembrane regions into the membrane. In addition to its role in multi-pass membrane insertion, RAB5IF/OPTI also acts as an assembly factor for mitochondrial respiratory complexes. The polypeptide is GEL complex subunit OPTI (RAB5IF) (Canis lupus familiaris (Dog)).